Here is a 210-residue protein sequence, read N- to C-terminus: Cell division protein SepF (210 aa).

The tract at residues 13–101 (GLADGDEYDE…EPVDPGYRAP (89 aa)) is disordered. Composition is skewed to basic and acidic residues over residues 22–70 (EQPR…ERPE) and 83–93 (VEPRRPARPEP).

The protein belongs to the SepF family. As to quaternary structure, homodimer. Interacts with FtsZ.

The protein localises to the cytoplasm. In terms of biological role, cell division protein that is part of the divisome complex and is recruited early to the Z-ring. Probably stimulates Z-ring formation, perhaps through the cross-linking of FtsZ protofilaments. Its function overlaps with FtsA. This chain is Cell division protein SepF, found in Micrococcus luteus (strain ATCC 4698 / DSM 20030 / JCM 1464 / CCM 169 / CCUG 5858 / IAM 1056 / NBRC 3333 / NCIMB 9278 / NCTC 2665 / VKM Ac-2230) (Micrococcus lysodeikticus).